The sequence spans 109 residues: DNA-binding protein MJ0691 (109 aa).

This sequence belongs to the PDCD5 family.

The polypeptide is DNA-binding protein MJ0691 (Methanocaldococcus jannaschii (strain ATCC 43067 / DSM 2661 / JAL-1 / JCM 10045 / NBRC 100440) (Methanococcus jannaschii)).